The following is an 88-amino-acid chain: Small ribosomal subunit protein bS18 (88 aa).

A compositionally biased stretch (low complexity) spans 1–11 (MTTANTTAKDN). A disordered region spans residues 1-21 (MTTANTTAKDNAATKKRGRKA).

Belongs to the bacterial ribosomal protein bS18 family. Part of the 30S ribosomal subunit. Forms a tight heterodimer with protein bS6.

Binds as a heterodimer with protein bS6 to the central domain of the 16S rRNA, where it helps stabilize the platform of the 30S subunit. In Thermoanaerobacter pseudethanolicus (strain ATCC 33223 / 39E) (Clostridium thermohydrosulfuricum), this protein is Small ribosomal subunit protein bS18.